The following is a 567-amino-acid chain: 2-succinyl-5-enolpyruvyl-6-hydroxy-3-cyclohexene-1-carboxylate synthase (567 aa).

The protein belongs to the TPP enzyme family. MenD subfamily. Homodimer. Mg(2+) serves as cofactor. The cofactor is Mn(2+). Requires thiamine diphosphate as cofactor.

It carries out the reaction isochorismate + 2-oxoglutarate + H(+) = 5-enolpyruvoyl-6-hydroxy-2-succinyl-cyclohex-3-ene-1-carboxylate + CO2. The protein operates within quinol/quinone metabolism; 1,4-dihydroxy-2-naphthoate biosynthesis; 1,4-dihydroxy-2-naphthoate from chorismate: step 2/7. Its pathway is quinol/quinone metabolism; menaquinone biosynthesis. Functionally, catalyzes the thiamine diphosphate-dependent decarboxylation of 2-oxoglutarate and the subsequent addition of the resulting succinic semialdehyde-thiamine pyrophosphate anion to isochorismate to yield 2-succinyl-5-enolpyruvyl-6-hydroxy-3-cyclohexene-1-carboxylate (SEPHCHC). This chain is 2-succinyl-5-enolpyruvyl-6-hydroxy-3-cyclohexene-1-carboxylate synthase, found in Shewanella loihica (strain ATCC BAA-1088 / PV-4).